The primary structure comprises 774 residues: Lysyl oxidase homolog 2 (774 aa).

The first 25 residues, 1–25 (MERPLCSHLCSCLAMLALLSPLSLA), serve as a signal peptide directing secretion. SRCR domains lie at 58-159 (LRLA…VVCS), 188-302 (IRAI…VSCV), 326-425 (VRLR…VRCN), and 435-544 (LRLN…VACS). Cystine bridges form between cysteine 84–cysteine 148, cysteine 97–cysteine 158, cysteine 128–cysteine 138, cysteine 218–cysteine 291, cysteine 231–cysteine 301, cysteine 265–cysteine 275, cysteine 351–cysteine 414, cysteine 364–cysteine 424, and cysteine 395–cysteine 405. N-linked (GlcNAc...) asparagine glycosylation is present at asparagine 288. Asparagine 455 carries N-linked (GlcNAc...) (complex) asparagine glycosylation. Cystine bridges form between cysteine 464–cysteine 530, cysteine 477–cysteine 543, and cysteine 511–cysteine 521. Residues 548 to 751 (PDLVLNAEMV…WMYNCHIGGS (204 aa)) are lysyl-oxidase like. 2 residues coordinate Ca(2+): aspartate 549 and leucine 550. 4 cysteine pairs are disulfide-bonded: cysteine 573-cysteine 625, cysteine 579-cysteine 695, cysteine 657-cysteine 673, and cysteine 663-cysteine 685. 3 residues coordinate Cu cation: histidine 626, histidine 628, and histidine 630. An N-linked (GlcNAc...) (complex) asparagine glycan is attached at asparagine 644. The lysine tyrosylquinone (Lys-Tyr) cross-link spans 653–689 (KASFCLEDTECEGDIQKNYECANFGDQGITMGCWDMY). Tyrosine 689 is subject to 2',4',5'-topaquinone. Ca(2+)-binding residues include glutamate 722, aspartate 724, asparagine 727, and asparagine 728. An intrachain disulfide couples cysteine 732 to cysteine 746.

Belongs to the lysyl oxidase family. As to quaternary structure, component of some chromatin repressor complex. Interacts with SNAI1. Interacts with TAF10. Interacts with HSPA5. Interacts with EFEMP2. The cofactor is Cu cation. It depends on lysine tyrosylquinone residue as a cofactor. Post-translationally, the lysine tyrosylquinone cross-link (LTQ) is generated by condensation of the epsilon-amino group of a lysine with a topaquinone produced by oxidation of tyrosine. N-glycosylated. N-glycosylation on Asn-455 and Asn-644 may be essential for proper folding and secretion; may be composed of a fucosylated carbohydrates attached to a trimannose N-linked glycan core. As to expression, expressed in many tissues. Highest expression in reproductive tissues, placenta, uterus and prostate. In esophageal epithelium, expressed in the basal, prickle and granular cell layers. Up-regulated in a number of cancers cells and tissues.

It localises to the secreted. The protein resides in the extracellular space. It is found in the extracellular matrix. The protein localises to the basement membrane. Its subcellular location is the nucleus. It localises to the chromosome. The protein resides in the endoplasmic reticulum. It carries out the reaction L-lysyl-[protein] + O2 + H2O = (S)-2-amino-6-oxohexanoyl-[protein] + H2O2 + NH4(+). With respect to regulation, according to some reports, it is inhibited by beta-aminopropionitrile (BAPN). According to another report, it is not inhibited by beta-aminopropionitrile (BAPN). Specifically inhibited by a mouse monoclonal antibody AB0023, inhibition occurs in a non-competitive manner. Functionally, mediates the post-translational oxidative deamination of lysine residues on target proteins leading to the formation of deaminated lysine (allysine). Acts as a transcription corepressor and specifically mediates deamination of trimethylated 'Lys-4' of histone H3 (H3K4me3), a specific tag for epigenetic transcriptional activation. Shows no activity against histone H3 when it is trimethylated on 'Lys-9' (H3K9me3) or 'Lys-27' (H3K27me3) or when 'Lys-4' is monomethylated (H3K4me1) or dimethylated (H3K4me2). Also mediates deamination of methylated TAF10, a member of the transcription factor IID (TFIID) complex, which induces release of TAF10 from promoters, leading to inhibition of TFIID-dependent transcription. LOXL2-mediated deamination of TAF10 results in transcriptional repression of genes required for embryonic stem cell pluripotency including POU5F1/OCT4, NANOG, KLF4 and SOX2. Involved in epithelial to mesenchymal transition (EMT) via interaction with SNAI1 and participates in repression of E-cadherin CDH1, probably by mediating deamination of histone H3. During EMT, involved with SNAI1 in negatively regulating pericentromeric heterochromatin transcription. SNAI1 recruits LOXL2 to pericentromeric regions to oxidize histone H3 and repress transcription which leads to release of heterochromatin component CBX5/HP1A, enabling chromatin reorganization and acquisition of mesenchymal traits. Interacts with the endoplasmic reticulum protein HSPA5 which activates the IRE1-XBP1 pathway of the unfolded protein response, leading to expression of several transcription factors involved in EMT and subsequent EMT induction. Involved in E-cadherin repression following hypoxia, a hallmark of EMT believed to amplify tumor aggressiveness, suggesting that it may play a role in tumor progression. When secreted into the extracellular matrix, promotes cross-linking of extracellular matrix proteins by mediating oxidative deamination of peptidyl lysine residues in precursors to fibrous collagen and elastin. Acts as a regulator of sprouting angiogenesis, probably via collagen IV scaffolding. Acts as a regulator of chondrocyte differentiation, probably by regulating expression of factors that control chondrocyte differentiation. The sequence is that of Lysyl oxidase homolog 2 (LOXL2) from Homo sapiens (Human).